Reading from the N-terminus, the 93-residue chain is Small ribosomal subunit protein uS19 (93 aa).

Belongs to the universal ribosomal protein uS19 family.

Functionally, protein S19 forms a complex with S13 that binds strongly to the 16S ribosomal RNA. The protein is Small ribosomal subunit protein uS19 of Phytoplasma australiense.